The following is a 190-amino-acid chain: Threonylcarbamoyl-AMP synthase (190 aa).

The YrdC-like domain occupies 7-190; the sequence is TGSSAAVVDL…ALTGELFRQG (184 aa).

The protein belongs to the SUA5 family. TsaC subfamily.

The protein resides in the cytoplasm. The catalysed reaction is L-threonine + hydrogencarbonate + ATP = L-threonylcarbamoyladenylate + diphosphate + H2O. Required for the formation of a threonylcarbamoyl group on adenosine at position 37 (t(6)A37) in tRNAs that read codons beginning with adenine. Catalyzes the conversion of L-threonine, HCO(3)(-)/CO(2) and ATP to give threonylcarbamoyl-AMP (TC-AMP) as the acyladenylate intermediate, with the release of diphosphate. The chain is Threonylcarbamoyl-AMP synthase from Salmonella typhi.